Here is a 161-residue protein sequence, read N- to C-terminus: UPF0178 protein BOV_1904 (161 aa).

It belongs to the UPF0178 family.

In Brucella ovis (strain ATCC 25840 / 63/290 / NCTC 10512), this protein is UPF0178 protein BOV_1904.